We begin with the raw amino-acid sequence, 554 residues long: Hydroxylamine reductase (554 aa).

Residues C3, C6, C18, and C25 each coordinate [2Fe-2S] cluster. Positions 252, 276, 320, 408, 436, 461, 495, and 497 each coordinate hybrid [4Fe-2O-2S] cluster. Residue C408 is modified to Cysteine persulfide.

It belongs to the HCP family. [2Fe-2S] cluster is required as a cofactor. It depends on hybrid [4Fe-2O-2S] cluster as a cofactor.

Its subcellular location is the cytoplasm. The catalysed reaction is A + NH4(+) + H2O = hydroxylamine + AH2 + H(+). Functionally, catalyzes the reduction of hydroxylamine to form NH(3) and H(2)O. This Shewanella putrefaciens (strain CN-32 / ATCC BAA-453) protein is Hydroxylamine reductase.